The following is a 233-amino-acid chain: Ribose-5-phosphate isomerase A (233 aa).

Residues 28-31 (SGST), 83-86 (DGAD), and 96-99 (KGGG) contribute to the substrate site. Residue E105 is the Proton acceptor of the active site. Substrate is bound at residue K123.

The protein belongs to the ribose 5-phosphate isomerase family. In terms of assembly, homodimer.

The enzyme catalyses aldehydo-D-ribose 5-phosphate = D-ribulose 5-phosphate. Its pathway is carbohydrate degradation; pentose phosphate pathway; D-ribose 5-phosphate from D-ribulose 5-phosphate (non-oxidative stage): step 1/1. Catalyzes the reversible conversion of ribose-5-phosphate to ribulose 5-phosphate. This Maricaulis maris (strain MCS10) (Caulobacter maris) protein is Ribose-5-phosphate isomerase A.